A 132-amino-acid polypeptide reads, in one-letter code: Phosphoribosyl-AMP cyclohydrolase (132 aa).

Mg(2+) is bound at residue D82. C83 contributes to the Zn(2+) binding site. 2 residues coordinate Mg(2+): D84 and D86. The Zn(2+) site is built by C99 and C106.

Belongs to the PRA-CH family. Homodimer. Requires Mg(2+) as cofactor. It depends on Zn(2+) as a cofactor.

Its subcellular location is the cytoplasm. The catalysed reaction is 1-(5-phospho-beta-D-ribosyl)-5'-AMP + H2O = 1-(5-phospho-beta-D-ribosyl)-5-[(5-phospho-beta-D-ribosylamino)methylideneamino]imidazole-4-carboxamide. It functions in the pathway amino-acid biosynthesis; L-histidine biosynthesis; L-histidine from 5-phospho-alpha-D-ribose 1-diphosphate: step 3/9. In terms of biological role, catalyzes the hydrolysis of the adenine ring of phosphoribosyl-AMP. The polypeptide is Phosphoribosyl-AMP cyclohydrolase (Paramagnetospirillum magneticum (strain ATCC 700264 / AMB-1) (Magnetospirillum magneticum)).